A 567-amino-acid chain; its full sequence is Protein ESMERALDA 1 (567 aa).

The tract at residues 1–41 (MLAKNRLPGSGHTTPSPPASPRRSPRYRHGRSKAAAGSRFP) is disordered. Residues 1–65 (MLAKNRLPGS…ILLSVLLRRQ (65 aa)) lie on the Cytoplasmic side of the membrane. Positions 23–32 (RSPRYRHGRS) are enriched in basic residues. The helical; Signal-anchor for type II membrane protein transmembrane segment at 66–86 (GIFLFAPLIYISCMLLYMGTV) threads the bilayer. Topologically, residues 87-567 (SFDVVPIIQR…TPESRPPPAT (481 aa)) are lumenal. Residues asparagine 121, asparagine 145, asparagine 184, and asparagine 238 are each glycosylated (N-linked (GlcNAc...) asparagine). Position 331-333 (331-333 (HLR)) interacts with substrate. Residues asparagine 403, asparagine 419, asparagine 449, asparagine 538, and asparagine 554 are each glycosylated (N-linked (GlcNAc...) asparagine).

The protein belongs to the glycosyltransferase GT106 family. Ubiquitous.

It localises to the golgi apparatus membrane. The protein operates within protein modification; protein glycosylation. Functionally, glycosyltransferase that plays a role in cell adhesion. This chain is Protein ESMERALDA 1, found in Arabidopsis thaliana (Mouse-ear cress).